Consider the following 275-residue polypeptide: T-cell ecto-ADP-ribosyltransferase 1 (275 aa).

Positions 1 to 20 (MPSNICKFFLTWWLIQQVTG) are cleaved as a signal peptide. 2 cysteine pairs are disulfide-bonded: cysteine 41–cysteine 243 and cysteine 141–cysteine 193. Residue asparagine 58 is glycosylated (N-linked (GlcNAc...) asparagine). Residues 61–238 (EKLKVAWEEA…IFLDSPKRKK (178 aa)) form the TR mART core domain. Residues tyrosine 98, arginine 146, and glutamine 164 each contribute to the NAD(+) site. Residue arginine 146 is part of the active site. The active site involves serine 167. Residue serine 202 coordinates NAD(+). Residue glutamate 209 is part of the active site. Serine 246 is lipidated: GPI-anchor amidated serine. Positions 247–275 (SAGTRESCVSLFLVVLTSLLVQLLCLAEP) are cleaved as a propeptide — removed in mature form.

This sequence belongs to the Arg-specific ADP-ribosyltransferase family. In terms of tissue distribution, postthymic T-cells.

Its subcellular location is the cell membrane. It catalyses the reaction L-arginyl-[protein] + NAD(+) = N(omega)-(ADP-D-ribosyl)-L-arginyl-[protein] + nicotinamide + H(+). It carries out the reaction NAD(+) + H2O = ADP-D-ribose + nicotinamide + H(+). Its function is as follows. Has NAD(+) glycohydrolase activity and extremely low ADP-ribosyltransferase activity. The polypeptide is T-cell ecto-ADP-ribosyltransferase 1 (Art2a) (Rattus norvegicus (Rat)).